A 91-amino-acid polypeptide reads, in one-letter code: Phosphocarrier protein NPr (91 aa).

One can recognise an HPr domain in the interval 3–90 (KLERQVTICN…ALVDAKFDEA (88 aa)). Catalysis depends on His-17, which acts as the Pros-phosphohistidine intermediate.

This sequence belongs to the HPr family.

Its subcellular location is the cytoplasm. Functionally, component of the phosphoenolpyruvate-dependent nitrogen-metabolic phosphotransferase system (nitrogen-metabolic PTS), that seems to be involved in regulating nitrogen metabolism. The phosphoryl group from phosphoenolpyruvate (PEP) is transferred to the phosphoryl carrier protein NPr by enzyme I-Ntr. Phospho-NPr then transfers it to EIIA-Ntr. Could function in the transcriptional regulation of sigma-54 dependent operons in conjunction with the NPr (PtsO) and EIIA-Ntr (PtsN) proteins. The sequence is that of Phosphocarrier protein NPr (ptsO) from Shewanella violacea (strain JCM 10179 / CIP 106290 / LMG 19151 / DSS12).